The sequence spans 998 residues: Antigenic heat-stable 120 kDa protein (998 aa).

The segment at 1–69 is disordered; the sequence is GGFMSQDHTG…LSGTISTDDQ (69 aa). A compositionally biased stretch (acidic residues) spans 12-21; that stretch reads ENDEGYESDI. Positions 46–68 are enriched in polar residues; sequence TPASSTQSTPAISTLSGTISTDD.

It localises to the cytoplasm. The chain is Antigenic heat-stable 120 kDa protein (sca4) from Rickettsia akari.